The chain runs to 136 residues: MKILKKLKKKLEKEESKILVDTSVLIDYFKKRRLEELGGEAISIITAVEFIRGISEHKQEQVLNIFKELFEIVYIDEEIIIPFSKIYRQLKKRGMLIDDADLYIACTAIIKNYPLWTKNKKHFERLKEFGLKIYDK.

The PINc domain occupies 18 to 129 (ILVDTSVLID…KKHFERLKEF (112 aa)). Asp-21 and Asp-101 together coordinate Mg(2+).

This sequence belongs to the PINc/VapC protein family. It depends on Mg(2+) as a cofactor.

Toxic component of a type II toxin-antitoxin (TA) system. An RNase. Its cognate antitoxin is VapB1. In Methanocaldococcus jannaschii (strain ATCC 43067 / DSM 2661 / JAL-1 / JCM 10045 / NBRC 100440) (Methanococcus jannaschii), this protein is Ribonuclease VapC1.